The chain runs to 313 residues: MARWRPDMAEREATPEALYLRRREFLALGAAGAVGLLVARGARAGEPSGAALQVARRVDQAGGETPTPWDSVTGYNNFYELGTSKEDPSRNAGSLRARPWTVTIAGEVKRPQTLDVDALVRMFPPEERVYRMRCVEAWSMVIPWVGFPLADLVRRLEPTSRAKYVAFQTLLDRDQLPGQRRPVLPWPYVEALRIDEATHPLALLAVGLYGRALPGQNGAPLRLVVPWKYGFKGAKSIVRITFLADRPHTTWNDAAPDEYGFYANVNPEVDHPRWSQARERRIGEFFRRKTLPFNGYAAEVAPLYAGLDLRKNY.

The segment at residues 1–44 (MARWRPDMAEREATPEALYLRRREFLALGAAGAVGLLVARGARA) is a signal peptide (tat-type signal). Mo-molybdopterin contacts are provided by residues Asn-76, 79–80 (YE), Cys-134, Thr-169, Asn-217, Arg-222, and 233–235 (GAK).

This sequence belongs to the MsrP family. Heterodimer of a catalytic subunit (MsrP) and a heme-binding subunit (MsrQ). Mo-molybdopterin serves as cofactor. Post-translationally, predicted to be exported by the Tat system. The position of the signal peptide cleavage has not been experimentally proven.

The protein resides in the periplasm. It catalyses the reaction L-methionyl-[protein] + a quinone + H2O = L-methionyl-(S)-S-oxide-[protein] + a quinol. The enzyme catalyses L-methionyl-[protein] + a quinone + H2O = L-methionyl-(R)-S-oxide-[protein] + a quinol. In terms of biological role, part of the MsrPQ system that repairs oxidized periplasmic proteins containing methionine sulfoxide residues (Met-O), using respiratory chain electrons. Thus protects these proteins from oxidative-stress damage caused by reactive species of oxygen and chlorine generated by the host defense mechanisms. MsrPQ is essential for the maintenance of envelope integrity under bleach stress, rescuing a wide series of structurally unrelated periplasmic proteins from methionine oxidation. The catalytic subunit MsrP is non-stereospecific, being able to reduce both (R-) and (S-) diastereoisomers of methionine sulfoxide. The protein is Protein-methionine-sulfoxide reductase catalytic subunit MsrP of Anaeromyxobacter sp. (strain K).